Here is a 436-residue protein sequence, read N- to C-terminus: T-box transcription factor TBX6 (436 aa).

Positions 100–273 (LWKEFSSVGT…ANPFAKGFRE (174 aa)) form a DNA-binding region, T-box. Positions 271–284 (FRENGRNCKRERDA) are enriched in basic and acidic residues. 2 disordered regions span residues 271-339 (FREN…APAP) and 360-379 (PSHLPTRSPSFPEAPDSGRS). The span at 325 to 339 (EQAPAPGEATAAPAP) shows a compositional bias: low complexity.

As to quaternary structure, forms a dimeric complex with DNA (in vitro). As to expression, expressed in fetal tail bud, posterior spinal tissue, intervertebral disk and testis. Also expressed in adult testis, kidney, lung, muscle and thymus.

Its subcellular location is the nucleus. Functionally, T-box transcription factor that plays an essential role in the determination of the fate of axial stem cells: neural vs mesodermal. Acts in part by down-regulating, a specific enhancer (N1) of SOX2, to inhibit neural development. Seems to play also an essential role in left/right axis determination and acts through effects on Notch signaling around the node as well as through an effect on the morphology and motility of the nodal cilia. The polypeptide is T-box transcription factor TBX6 (TBX6) (Homo sapiens (Human)).